Consider the following 441-residue polypeptide: MKITVRSSTVVVPAAETPRVRLWNANPDLVVPRFHTPSVYFYRRGGEDGGDACYFDAGRMRRALAEALVPFYPMAGRLAHDEDGRVEIDCNAEGVLFVEADAPDGAVDDFGDFVPTMGLKRLIPTVDFTGGISSYPLLVVQVTHFKCGGVALGIAMQHHVADGFSGLHFINSWSDLCRGVPIAVMPFIDRTLLRARDPPVPTHPHIEYQPAPAMLGSEEPQALAGKPESPPTAVDIFKLSRSDLGRLRAQLPTGEGAPRFSTYAVLGAHVWRCASLARGLAPEQPTKLYCATDGRQRLTPTHPDGYFGNVIFTATPLAEAGKVTGSLADGATTIQDALEKMDDEYCHSALDYLELQPDLSALVRGAHTFRCPNLGLTSWVRLPIHDADFGWGRPVFMGPGGIAYEGLAFVLPSANRDGSLSVAISLQAEHMEKFRKMIFDF.

Residues His158 and Asp388 each act as proton acceptor in the active site.

This sequence belongs to the plant acyltransferase family.

The catalysed reaction is 5-hydroxyanthranilate + (E)-4-coumaroyl-CoA = avenanthramide A + CoA. It carries out the reaction 5-hydroxyanthranilate + (E)-caffeoyl-CoA = avenanthramide C + CoA. Functionally, involved in the biosynthesis of avenanthramide phytoalexins, which are phenolic alkaloids found mainly in oats. Catalyzes the N-acylation of 5-hydroxyanthranilate with 4-coumaroyl-CoA or caffeoyl-CoA as acyl donors, forming avenanthramide A and avenanthramide C, respectively. Does not accept feruloyl-CoA as a substrate. This chain is Hydroxycinnamoyl-CoA:5-hydroxyanthranilate N-hydroxycinnamoyltransferase HHT1, found in Avena sativa (Oat).